The sequence spans 317 residues: Ferrochelatase (317 aa).

The Fe cation site is built by His187 and Glu268.

It belongs to the ferrochelatase family.

It localises to the cytoplasm. It catalyses the reaction heme b + 2 H(+) = protoporphyrin IX + Fe(2+). The protein operates within porphyrin-containing compound metabolism; protoheme biosynthesis; protoheme from protoporphyrin-IX: step 1/1. In terms of biological role, catalyzes the ferrous insertion into protoporphyrin IX. The chain is Ferrochelatase from Campylobacter concisus (strain 13826).